The primary structure comprises 371 residues: Putative glutamate--cysteine ligase 2 (371 aa).

It belongs to the glutamate--cysteine ligase type 2 family. YbdK subfamily. Homodimer.

The enzyme catalyses L-cysteine + L-glutamate + ATP = gamma-L-glutamyl-L-cysteine + ADP + phosphate + H(+). Its function is as follows. ATP-dependent carboxylate-amine ligase which exhibits weak glutamate--cysteine ligase activity. The polypeptide is Putative glutamate--cysteine ligase 2 (Cronobacter sakazakii (strain ATCC BAA-894) (Enterobacter sakazakii)).